A 609-amino-acid polypeptide reads, in one-letter code: Interleukin-1 receptor-associated kinase 3 (609 aa).

In terms of domain architecture, Death spans tryptophan 41 to glycine 106. Threonine 110 is subject to Phosphothreonine. In terms of domain architecture, Protein kinase spans phenylalanine 178–leucine 463. Residues isoleucine 184–valine 192, lysine 205, serine 308–asparagine 311, and aspartate 324 contribute to the ATP site. A Phosphoserine modification is found at serine 480.

Belongs to the protein kinase superfamily. TKL Ser/Thr protein kinase family. Pelle subfamily. Monomer. Homodimer. May interact with IRAK4 (when phosphorylated). Interacts (when phosphorylated at Thr-110) with PIN1 (via WW domain) in response to IL33-mediated (but not TLR4 ligand LPS) dendritic cell stimulation. As to expression, expressed in inflamed lung macrophages (at protein level). Expressed in dendritic cells (at protein level). Highly expressed in liver and thymus and at lower levels in heart, brain, spleen and kidney.

Its subcellular location is the cytoplasm. The protein resides in the nucleus. Its function is as follows. Putative inactive protein kinase which regulates signaling downstream of immune receptors including IL1R and Toll-like receptors. Inhibits dissociation of IRAK1 and IRAK4 from the Toll-like receptor signaling complex by either inhibiting the phosphorylation of IRAK1 and IRAK4 or stabilizing the receptor complex. Upon IL33-induced lung inflammation, positively regulates expression of IL6, CSF3, CXCL2 and CCL5 mRNAs in dendritic cells. This Mus musculus (Mouse) protein is Interleukin-1 receptor-associated kinase 3.